The primary structure comprises 176 residues: MGFPKEGEKVQIHSYKHNGSIHRMWKETTILKGTQSLVIGANDRTVVTESDGRTWITREPAICYFHENYWFNVIGMLREEGVYYYCNLSSPFAYDSEALKYIDYDLDIKVYPDMTYTLLDEDEYEKHSQIMQYPPVIDTILKRNVAQLTQWIHQRKGPFAPDFVDMWYERYLMYRN.

R23 (proton donor) is an active-site residue. The Mg(2+) site is built by N87, D103, D105, D107, D120, and E123.

The protein belongs to the Ntdp family. It depends on Mg(2+) as a cofactor.

The enzyme catalyses a ribonucleoside 5'-triphosphate + H2O = a ribonucleoside 5'-diphosphate + phosphate + H(+). It catalyses the reaction a ribonucleoside 5'-diphosphate + H2O = a ribonucleoside 5'-phosphate + phosphate + H(+). Functionally, has nucleoside phosphatase activity towards nucleoside triphosphates and nucleoside diphosphates. This Bacillus anthracis (strain A0248) protein is Nucleoside triphosphate/diphosphate phosphatase.